We begin with the raw amino-acid sequence, 251 residues long: Acidic leucine-rich nuclear phosphoprotein 32 family member B (251 aa).

LRR repeat units lie at residues 16-40, 43-64, and 65-84; these read PAAV…LTAE, NLEF…PKLP, and KLKK…DMLA. Lys-86 is modified (N6-acetyllysine). The LRR 4 repeat unit spans residues 89–110; that stretch reads NLTHLNLSGNKLKDISTLEPLK. The LRRCT domain occupies 123–161; the sequence is CEVTNLNDYRESVFKLLPQLTYLDGYDREDQEAPDSDAE. Acidic residues predominate over residues 149 to 233; it reads DREDQEAPDS…DEDEDEEEEE (85 aa). The tract at residues 149 to 251 is disordered; the sequence is DREDQEAPDS…RETDDEGEDD (103 aa). Ser-158 bears the Phosphoserine mark. The segment covering 234–244 has biased composition (basic and acidic residues); it reads GGKGEKRKRET. Positions 239–242 match the Nuclear localization signal motif; that stretch reads KRKR. Residue Thr-244 is modified to Phosphothreonine.

The protein belongs to the ANP32 family. Interacts with histones H3 and H4. Interacts with KLF5; this interaction induces promoter region-specific histone incorporation and inhibition of histone acetylation by ANP32B. In terms of assembly, (Microbial infection) Interacts with Sendai virus protein M. As to quaternary structure, (Microbial infection) Interacts with Measles virus protein M. (Microbial infection) Interacts with Hendra virus protein M; this interaction promotes nuclear localization of M. In terms of assembly, (Microbial infection) Interacts with influenza virus B protein PB2; this interaction strongly supports influenza B virus replication. Some glutamate residues are glycylated by TTLL8. This modification occurs exclusively on glutamate residues and results in a glycine chain on the gamma-carboxyl group. Post-translationally, directly cleaved by caspase-3/CASP3. In terms of tissue distribution, expressed in heart, lung, pancreas, prostate and in spleen, thymus and placenta.

It localises to the nucleus. The protein localises to the cytoplasm. In terms of biological role, multifunctional protein that is involved in the regulation of many processes including cell proliferation, apoptosis, cell cycle progression or transcription. Regulates the proliferation of neuronal stem cells, differentiation of leukemic cells and progression from G1 to S phase of the cell cycle. As negative regulator of caspase-3-dependent apoptosis, may act as an antagonist of ANP32A in regulating tissue homeostasis. Exhibits histone chaperone properties, able to recruit histones to certain promoters, thus regulating the transcription of specific genes. Also plays an essential role in the nucleocytoplasmic transport of specific mRNAs via the uncommon nuclear mRNA export receptor XPO1/CRM1. Participates in the regulation of adequate adaptive immune responses by acting on mRNA expression and cell proliferation. (Microbial infection) Plays an essential role in influenza A and B viral genome replication. Also plays a role in foamy virus mRNA export from the nucleus to the cytoplasm. The protein is Acidic leucine-rich nuclear phosphoprotein 32 family member B (ANP32B) of Homo sapiens (Human).